We begin with the raw amino-acid sequence, 236 residues long: Aquaporin Z (236 aa).

Helical transmembrane passes span 12-32 (FFGT…AAGV) and 37-57 (IGYA…AYAV). The NPA 1 motif lies at 66-68 (NPA). 3 helical membrane passes run 92 to 112 (VVGA…VAGF), 136 to 156 (AALI…LGAT), and 163 to 183 (GFAP…SIPV). Positions 189–191 (NPA) match the NPA 2 motif. The helical transmembrane segment at 197–217 (ALFVGGWALEQLWLFWLAPIA) threads the bilayer.

The protein belongs to the MIP/aquaporin (TC 1.A.8) family. Homotetramer.

It is found in the cell inner membrane. The catalysed reaction is H2O(in) = H2O(out). In terms of biological role, channel that permits osmotically driven movement of water in both directions. It is involved in the osmoregulation and in the maintenance of cell turgor during volume expansion in rapidly growing cells. It mediates rapid entry or exit of water in response to abrupt changes in osmolarity. The chain is Aquaporin Z from Bordetella bronchiseptica (strain ATCC BAA-588 / NCTC 13252 / RB50) (Alcaligenes bronchisepticus).